The sequence spans 513 residues: Maturase K (513 aa).

Belongs to the intron maturase 2 family. MatK subfamily.

The protein localises to the plastid. It localises to the chloroplast. Usually encoded in the trnK tRNA gene intron. Probably assists in splicing its own and other chloroplast group II introns. The polypeptide is Maturase K (Byblis liniflora (Carnivorous plant)).